The primary structure comprises 363 residues: Fructose-bisphosphate aldolase A (363 aa).

Position 43 (Arg43) interacts with beta-D-fructose 1,6-bisphosphate. Glu188 acts as the Proton acceptor in catalysis. Lys230 functions as the Schiff-base intermediate with dihydroxyacetone-P in the catalytic mechanism. Beta-D-fructose 1,6-bisphosphate-binding positions include 272–274 (SGG), Ser301, and Arg304.

The protein belongs to the class I fructose-bisphosphate aldolase family. In terms of assembly, tetramer.

The catalysed reaction is beta-D-fructose 1,6-bisphosphate = D-glyceraldehyde 3-phosphate + dihydroxyacetone phosphate. Its pathway is carbohydrate degradation; glycolysis; D-glyceraldehyde 3-phosphate and glycerone phosphate from D-glucose: step 4/4. In terms of biological role, plays a key role in glycolysis and gluconeogenesis. This is Fructose-bisphosphate aldolase A from Salmo salar (Atlantic salmon).